The sequence spans 476 residues: RuvB-like helicase 2 (476 aa).

An ATP-binding site is contributed by 76–83 (GPPSTGKT).

The protein belongs to the RuvB family. In terms of assembly, may form heterododecamers with RVB1. Component of the SWR1 chromatin remodeling complex, the INO80 chromatin remodeling complex, and of the R2TP complex.

It is found in the nucleus. The enzyme catalyses ATP + H2O = ADP + phosphate + H(+). In terms of biological role, DNA helicase which participates in several chromatin remodeling complexes, including the SWR1 and the INO80 complexes. The SWR1 complex mediates the ATP-dependent exchange of histone H2A for the H2A variant HZT1 leading to transcriptional regulation of selected genes by chromatin remodeling. The INO80 complex remodels chromatin by shifting nucleosomes and is involved in DNA repair. Also involved in pre-rRNA processing. This chain is RuvB-like helicase 2 (RVB2), found in Candida glabrata (strain ATCC 2001 / BCRC 20586 / JCM 3761 / NBRC 0622 / NRRL Y-65 / CBS 138) (Yeast).